The chain runs to 258 residues: Type III pantothenate kinase (258 aa).

6 to 13 serves as a coordination point for ATP; the sequence is DVGNTNTV. Substrate contacts are provided by residues Tyr-100 and 107-110; that span reads GADR. The Proton acceptor role is filled by Asp-109. Residue Asp-129 coordinates K(+). Thr-132 contacts ATP. Thr-184 lines the substrate pocket.

This sequence belongs to the type III pantothenate kinase family. Homodimer. The cofactor is NH4(+). Requires K(+) as cofactor.

The protein localises to the cytoplasm. The catalysed reaction is (R)-pantothenate + ATP = (R)-4'-phosphopantothenate + ADP + H(+). The protein operates within cofactor biosynthesis; coenzyme A biosynthesis; CoA from (R)-pantothenate: step 1/5. Functionally, catalyzes the phosphorylation of pantothenate (Pan), the first step in CoA biosynthesis. This chain is Type III pantothenate kinase, found in Bacillus licheniformis (strain ATCC 14580 / DSM 13 / JCM 2505 / CCUG 7422 / NBRC 12200 / NCIMB 9375 / NCTC 10341 / NRRL NRS-1264 / Gibson 46).